A 182-amino-acid polypeptide reads, in one-letter code: Crossover junction endodeoxyribonuclease RuvC (182 aa).

Catalysis depends on residues aspartate 7, glutamate 69, and aspartate 141. Positions 7, 69, and 141 each coordinate Mg(2+).

The protein belongs to the RuvC family. Homodimer which binds Holliday junction (HJ) DNA. The HJ becomes 2-fold symmetrical on binding to RuvC with unstacked arms; it has a different conformation from HJ DNA in complex with RuvA. In the full resolvosome a probable DNA-RuvA(4)-RuvB(12)-RuvC(2) complex forms which resolves the HJ. The cofactor is Mg(2+).

It is found in the cytoplasm. It carries out the reaction Endonucleolytic cleavage at a junction such as a reciprocal single-stranded crossover between two homologous DNA duplexes (Holliday junction).. Functionally, the RuvA-RuvB-RuvC complex processes Holliday junction (HJ) DNA during genetic recombination and DNA repair. Endonuclease that resolves HJ intermediates. Cleaves cruciform DNA by making single-stranded nicks across the HJ at symmetrical positions within the homologous arms, yielding a 5'-phosphate and a 3'-hydroxyl group; requires a central core of homology in the junction. The consensus cleavage sequence is 5'-(A/T)TT(C/G)-3'. Cleavage occurs on the 3'-side of the TT dinucleotide at the point of strand exchange. HJ branch migration catalyzed by RuvA-RuvB allows RuvC to scan DNA until it finds its consensus sequence, where it cleaves and resolves the cruciform DNA. In Paracidovorax citrulli (strain AAC00-1) (Acidovorax citrulli), this protein is Crossover junction endodeoxyribonuclease RuvC.